A 156-amino-acid chain; its full sequence is 6,7-dimethyl-8-ribityllumazine synthase (156 aa).

Residues Phe22, 57–59 (AYE), and 81–83 (TVI) contribute to the 5-amino-6-(D-ribitylamino)uracil site. Position 86 to 87 (86 to 87 (GT)) interacts with (2S)-2-hydroxy-3-oxobutyl phosphate. The active-site Proton donor is His89. Residue Phe114 participates in 5-amino-6-(D-ribitylamino)uracil binding. Arg128 is a binding site for (2S)-2-hydroxy-3-oxobutyl phosphate.

The protein belongs to the DMRL synthase family. In terms of assembly, forms an icosahedral capsid composed of 60 subunits, arranged as a dodecamer of pentamers.

It carries out the reaction (2S)-2-hydroxy-3-oxobutyl phosphate + 5-amino-6-(D-ribitylamino)uracil = 6,7-dimethyl-8-(1-D-ribityl)lumazine + phosphate + 2 H2O + H(+). The protein operates within cofactor biosynthesis; riboflavin biosynthesis; riboflavin from 2-hydroxy-3-oxobutyl phosphate and 5-amino-6-(D-ribitylamino)uracil: step 1/2. Its function is as follows. Catalyzes the formation of 6,7-dimethyl-8-ribityllumazine by condensation of 5-amino-6-(D-ribitylamino)uracil with 3,4-dihydroxy-2-butanone 4-phosphate. This is the penultimate step in the biosynthesis of riboflavin. The sequence is that of 6,7-dimethyl-8-ribityllumazine synthase from Photorhabdus laumondii subsp. laumondii (strain DSM 15139 / CIP 105565 / TT01) (Photorhabdus luminescens subsp. laumondii).